Here is a 377-residue protein sequence, read N- to C-terminus: Succinyl-diaminopimelate desuccinylase (377 aa).

A Zn(2+)-binding site is contributed by H67. D69 is an active-site residue. D100 provides a ligand contact to Zn(2+). E134 serves as the catalytic Proton acceptor. Zn(2+) is bound by residues E135, E163, and H349.

It belongs to the peptidase M20A family. DapE subfamily. In terms of assembly, homodimer. The cofactor is Zn(2+). Requires Co(2+) as cofactor.

The catalysed reaction is N-succinyl-(2S,6S)-2,6-diaminopimelate + H2O = (2S,6S)-2,6-diaminopimelate + succinate. The protein operates within amino-acid biosynthesis; L-lysine biosynthesis via DAP pathway; LL-2,6-diaminopimelate from (S)-tetrahydrodipicolinate (succinylase route): step 3/3. Catalyzes the hydrolysis of N-succinyl-L,L-diaminopimelic acid (SDAP), forming succinate and LL-2,6-diaminopimelate (DAP), an intermediate involved in the bacterial biosynthesis of lysine and meso-diaminopimelic acid, an essential component of bacterial cell walls. This Actinobacillus pleuropneumoniae serotype 5b (strain L20) protein is Succinyl-diaminopimelate desuccinylase.